The following is a 268-amino-acid chain: Imidazole glycerol phosphate synthase subunit HisF (268 aa).

Active-site residues include Asp-12 and Asp-131.

The protein belongs to the HisA/HisF family. Heterodimer of HisH and HisF.

The protein localises to the cytoplasm. It catalyses the reaction 5-[(5-phospho-1-deoxy-D-ribulos-1-ylimino)methylamino]-1-(5-phospho-beta-D-ribosyl)imidazole-4-carboxamide + L-glutamine = D-erythro-1-(imidazol-4-yl)glycerol 3-phosphate + 5-amino-1-(5-phospho-beta-D-ribosyl)imidazole-4-carboxamide + L-glutamate + H(+). It functions in the pathway amino-acid biosynthesis; L-histidine biosynthesis; L-histidine from 5-phospho-alpha-D-ribose 1-diphosphate: step 5/9. IGPS catalyzes the conversion of PRFAR and glutamine to IGP, AICAR and glutamate. The HisF subunit catalyzes the cyclization activity that produces IGP and AICAR from PRFAR using the ammonia provided by the HisH subunit. The polypeptide is Imidazole glycerol phosphate synthase subunit HisF (Chelativorans sp. (strain BNC1)).